Here is a 426-residue protein sequence, read N- to C-terminus: Putative F-box/LRR-repeat protein At4g15060 (426 aa).

The 47-residue stretch at 25–71 folds into the F-box domain; the sequence is MDKISRLPDDLLVKVLLFLPTKIAVSTSILSKRWEFLWMWLPKLEYH. LRR repeat units lie at residues 50-75, 80-106, 160-187, 188-213, 221-259, 265-290, 311-337, 338-363, and 373-399; these read STSILSKRWEFLWMWLPKLEYHNTNY, EQRLRSFINLNLQLHRAPIIESLRLKF, ILKLKDQILVDVPRMAYLPSLKYLLLKR, VTYKDSNSLHQLLSSCPVLKNLVVER, TLSITVSSLQRLTLKISRGGSFDELVINTPSLKYFKLTD, ETELDDDSYSYVFKDMPKLEEAHIDS, CVKVNAEEALYREGICFKQLEHLKLCP, CDSNWSKLLARLLKDSPNLRELEIKL, and DPACLENQLNYVVQSSIPSLERFTWTW.

The polypeptide is Putative F-box/LRR-repeat protein At4g15060 (Arabidopsis thaliana (Mouse-ear cress)).